The following is a 443-amino-acid chain: Glutamine synthetase (443 aa).

Residues 11 to 97 (VQVEVPRPRF…VYGYIYKGDE (87 aa)) enclose the GS beta-grasp domain. The region spanning 103-443 (PRGILKRVLE…EWELERYFYV (341 aa)) is the GS catalytic domain. Positions 126 and 128 each coordinate Mg(2+). E176 is an ATP binding site. Residues E181 and E188 each contribute to the Mg(2+) site. An L-glutamate-binding site is contributed by G233. Residue H237 coordinates Mg(2+). Residues 239–241 (HIS) and S241 contribute to the ATP site. Positions 287, 293, and 305 each coordinate L-glutamate. Positions 305 and 310 each coordinate ATP. A Mg(2+)-binding site is contributed by E322. An L-glutamate-binding site is contributed by R324.

The protein belongs to the glutamine synthetase family. As to quaternary structure, oligomer of 12 subunits arranged in the form of two hexagons. Mg(2+) is required as a cofactor. Requires Mn(2+) as cofactor.

Its subcellular location is the cytoplasm. The catalysed reaction is L-glutamate + NH4(+) + ATP = L-glutamine + ADP + phosphate + H(+). It carries out the reaction hydroxylamine + L-glutamate + ATP = L-glutamine hydroxamate + ADP + phosphate. Its activity is regulated as follows. The activity of this enzyme is not controlled by adenylation. In terms of biological role, carries out the ATP-dependent synthesis of glutamine from ammonium nitrogen and glutamate. Exhibits both L-gamma-glutamylhydroxamate synthetase and gamma-glutamyltransferase activities when using hydroxylamine as substrate; in fact, the enzyme possesses low biosynthetic activity, suggesting that the reaction is biased towards the degradation of glutamine under ammonia-rich conditions. Might play some role in ammonia assimilation under ammonia-starvation conditions. Can also use GTP instead of ATP in the synthetase reaction, but not CTP or UTP. This is Glutamine synthetase from Thermococcus kodakarensis (strain ATCC BAA-918 / JCM 12380 / KOD1) (Pyrococcus kodakaraensis (strain KOD1)).